Consider the following 122-residue polypeptide: Large ribosomal subunit protein uL14 (122 aa).

It belongs to the universal ribosomal protein uL14 family. As to quaternary structure, part of the 50S ribosomal subunit. Forms a cluster with proteins L3 and L19. In the 70S ribosome, L14 and L19 interact and together make contacts with the 16S rRNA in bridges B5 and B8.

Binds to 23S rRNA. Forms part of two intersubunit bridges in the 70S ribosome. The protein is Large ribosomal subunit protein uL14 of Sphingopyxis alaskensis (strain DSM 13593 / LMG 18877 / RB2256) (Sphingomonas alaskensis).